The primary structure comprises 115 residues: Iron-sulfur cluster insertion protein ErpA (115 aa).

Cys-42, Cys-106, and Cys-108 together coordinate iron-sulfur cluster.

The protein belongs to the HesB/IscA family. Homodimer. Iron-sulfur cluster serves as cofactor.

In terms of biological role, required for insertion of 4Fe-4S clusters for at least IspG. This Baumannia cicadellinicola subsp. Homalodisca coagulata protein is Iron-sulfur cluster insertion protein ErpA.